The sequence spans 485 residues: Pumilio domain-containing protein 7 (485 aa).

Residues 29–72 (NKTHKNKNPKPPVKLLPYRHGSNTTSSDSDSYIFNSGSGSSDAE) are disordered. A compositionally biased stretch (polar residues) spans 49-71 (GSNTTSSDSDSYIFNSGSGSSDA). Pumilio repeat units lie at residues 86–124 (DVLL…AVFE), 128–163 (ESTT…ELLR), 164–200 (QMID…QLIQ), 201–236 (ELST…TFFV), 237–279 (HFLS…FRIQ), 287–324 (CIVR…TIID), 326–361 (CLLR…EMME), and 370–411 (DVES…RELP). The RNA-binding stretch occupies residues 439 to 454 (FSSGKKIIDSVMRHGV).

Its function is as follows. RNA-binding protein that binds to the consensus sequence 5'-CUCUGUAUCUUGU-3' in mRNA 3'-UTRs and modulates mRNA expression and stability. Functions redundantly with puf-5 and puf-6 in oocyte formation and organization, early embryonic cell divisions, and repression of expression of glp-1 and other maternal mRNAs in late oogenesis. This is Pumilio domain-containing protein 7 from Caenorhabditis elegans.